A 753-amino-acid chain; its full sequence is Probable dipeptidyl peptidase 4 (753 aa).

A signal peptide spans 1–18 (MKTSQFLSLLLLAGIAQA). Residues N84, N114, and N222 are each glycosylated (N-linked (GlcNAc...) asparagine). Active-site charge relay system residues include S616, D668, and H703.

Belongs to the peptidase S9B family.

The protein localises to the secreted. The enzyme catalyses Release of an N-terminal dipeptide, Xaa-Yaa-|-Zaa-, from a polypeptide, preferentially when Yaa is Pro, provided Zaa is neither Pro nor hydroxyproline.. Functionally, extracellular dipeptidyl-peptidase which removes N-terminal dipeptides sequentially from polypeptides having unsubstituted N-termini provided that the penultimate residue is proline. Contributes to pathogenicity. This Trichophyton verrucosum (strain HKI 0517) protein is Probable dipeptidyl peptidase 4 (DPP4).